The chain runs to 192 residues: Large ribosomal subunit protein uL10 (192 aa).

This sequence belongs to the universal ribosomal protein uL10 family. In terms of assembly, part of the ribosomal stalk of the 50S ribosomal subunit. The N-terminus interacts with L11 and the large rRNA to form the base of the stalk. The C-terminus forms an elongated spine to which L12 dimers bind in a sequential fashion forming a multimeric L10(L12)X complex.

Its function is as follows. Forms part of the ribosomal stalk, playing a central role in the interaction of the ribosome with GTP-bound translation factors. This chain is Large ribosomal subunit protein uL10, found in Gloeobacter violaceus (strain ATCC 29082 / PCC 7421).